Consider the following 74-residue polypeptide: Cytochrome c oxidase subunit 6C (74 aa).

The Mitochondrial matrix portion of the chain corresponds to 2–12 (STALAKPQMRG). A helical transmembrane segment spans residues 13–53 (LLARRLRFHIVGAFMVSLGFATFYKFAVAEKRKKAYADFYR). Residues 54-74 (NYDSMKDFEEMRKAGIFQSAK) are Mitochondrial intermembrane-facing.

It belongs to the cytochrome c oxidase subunit 6c family. Component of the cytochrome c oxidase (complex IV, CIV), a multisubunit enzyme composed of 14 subunits. The complex is composed of a catalytic core of 3 subunits MT-CO1, MT-CO2 and MT-CO3, encoded in the mitochondrial DNA, and 11 supernumerary subunits COX4I1 (or COX4I2), COX5A, COX5B, COX6A2 (or COX6A1), COX6B1 (or COX6B2), COX6C, COX7A1 (or COX7A2), COX7B, COX7C, COX8B and NDUFA4, which are encoded in the nuclear genome. The complex exists as a monomer or a dimer and forms supercomplexes (SCs) in the inner mitochondrial membrane with NADH-ubiquinone oxidoreductase (complex I, CI) and ubiquinol-cytochrome c oxidoreductase (cytochrome b-c1 complex, complex III, CIII), resulting in different assemblies (supercomplex SCI(1)III(2)IV(1) and megacomplex MCI(2)III(2)IV(2)).

The protein localises to the mitochondrion inner membrane. Its pathway is energy metabolism; oxidative phosphorylation. Component of the cytochrome c oxidase, the last enzyme in the mitochondrial electron transport chain which drives oxidative phosphorylation. The respiratory chain contains 3 multisubunit complexes succinate dehydrogenase (complex II, CII), ubiquinol-cytochrome c oxidoreductase (cytochrome b-c1 complex, complex III, CIII) and cytochrome c oxidase (complex IV, CIV), that cooperate to transfer electrons derived from NADH and succinate to molecular oxygen, creating an electrochemical gradient over the inner membrane that drives transmembrane transport and the ATP synthase. Cytochrome c oxidase is the component of the respiratory chain that catalyzes the reduction of oxygen to water. Electrons originating from reduced cytochrome c in the intermembrane space (IMS) are transferred via the dinuclear copper A center (CU(A)) of subunit 2 and heme A of subunit 1 to the active site in subunit 1, a binuclear center (BNC) formed by heme A3 and copper B (CU(B)). The BNC reduces molecular oxygen to 2 water molecules using 4 electrons from cytochrome c in the IMS and 4 protons from the mitochondrial matrix. This is Cytochrome c oxidase subunit 6C (COX6C) from Bos taurus (Bovine).